Consider the following 367-residue polypeptide: Heat-inducible transcription repressor HrcA (367 aa).

The protein belongs to the HrcA family.

Its function is as follows. Negative regulator of class I heat shock genes (grpE-dnaK-dnaJ and groELS operons). Prevents heat-shock induction of these operons. The chain is Heat-inducible transcription repressor HrcA from Acaryochloris marina (strain MBIC 11017).